The chain runs to 1885 residues: Chitin synthase 5 (1885 aa).

The region spanning 1-789 (MATRGNVPAH…SIALTGSQAA (789 aa)) is the Myosin motor domain. An ATP-binding site is contributed by 99–106 (GESGSGKT). Residues Asn219 and Asn429 are each glycosylated (N-linked (GlcNAc...) asparagine). The tract at residues 601–649 (KPLRMPSVSRKKHDQLRRMASRRADRSPAPQEEEPLPGTEEAKVRRTKP) is disordered. The segment covering 609–621 (SRKKHDQLRRMAS) has biased composition (basic residues). The segment at 666 to 690 (LDNITKSLTAPNVNNYFVFCLKPND) is actin-binding. Asn668 carries N-linked (GlcNAc...) asparagine glycosylation. The disordered stretch occupies residues 794 to 817 (GDIGSPSRPDTPGHNPFSDSKARL). Transmembrane regions (helical) follow at residues 894–914 (WLAI…KWIG) and 929–949 (FAIN…IIVF). The 60-residue stretch at 957–1016 (QNVYSAAELSAHDGKGKHSAYVAIRGQVFDLGAFMPNHYPKIIPQSSLKKYAGVDATGLF) folds into the Cytochrome b5 heme-binding domain. N-linked (GlcNAc...) asparagine glycans are attached at residues Asn1043 and Asn1068. A helical membrane pass occupies residues 1205-1225 (ILLAVSILLCSVIGFKFFAAL). N-linked (GlcNAc...) asparagine glycosylation is found at Asn1462 and Asn1568. 3 helical membrane-spanning segments follow: residues 1599-1619 (LLST…IVLL), 1626-1646 (VPLT…IIFI), and 1653-1673 (MIGW…GLPL). N-linked (GlcNAc...) asparagine glycosylation is found at Asn1759 and Asn1790. The DEK-C domain occupies 1827-1882 (LPTDDMLLNEIRDILRTADLMTVTKKGIKQELERRFNVNLDMKRAYIGSATEAILS).

In the N-terminal section; belongs to the TRAFAC class myosin-kinesin ATPase superfamily. Myosin family. This sequence in the C-terminal section; belongs to the chitin synthase family. Class V subfamily. In terms of processing, maximal activity requires trypsin activation, suggesting a zymogenic nature.

Its subcellular location is the cell membrane. The protein localises to the membrane. The enzyme catalyses [(1-&gt;4)-N-acetyl-beta-D-glucosaminyl](n) + UDP-N-acetyl-alpha-D-glucosamine = [(1-&gt;4)-N-acetyl-beta-D-glucosaminyl](n+1) + UDP + H(+). Polymerizes chitin, a structural polymer of the cell wall and septum, by transferring the sugar moiety of UDP-GlcNAc to the non-reducing end of the growing chitin polymer. CHS5 is required for the sustained growth at 37 degrees Celsius and is of critical importance for virulence. Especially important at infection temperatures for maintaining the cell wall integrity of developing yeast buds, elongating tips of hyphae, and random sites of expansion in sclerotic forms. This is Chitin synthase 5 from Exophiala dermatitidis (strain ATCC 34100 / CBS 525.76 / NIH/UT8656) (Black yeast).